The following is a 469-amino-acid chain: Keratin, type II cytoskeletal 7 (469 aa).

At Ser-2 the chain carries N-acetylserine. Phosphoserine is present on residues Ser-2, Ser-6, and Ser-7. Residues 2-90 are head; the sequence is SIHFSSPVFT…DPSLQRVRQE (89 aa). The O-linked (GlcNAc) serine glycan is linked to Ser-12. Arg-20 carries the dimethylated arginine; alternate modification. Position 20 is an omega-N-methylarginine; alternate (Arg-20). Phosphoserine occurs at positions 53, 71, and 83. The segment at 90 to 126 is coil 1A; sequence EEREQIKTLNNKFASFIDKVRFLEQQNKLLETKWTLL. Residues 91-403 form the IF rod domain; it reads EREQIKTLNN…KLLEGEESRL (313 aa). Thr-97 carries the post-translational modification Phosphothreonine. Residues 127–144 are linker 1; sequence QEQKSAKSSRLPDIFEAQ. Residue Lys-130 forms a Glycyl lysine isopeptide (Lys-Gly) (interchain with G-Cter in SUMO2) linkage. Residues 145-236 are coil 1B; the sequence is IAGLRGQLEA…TLNETELTEL (92 aa). Lys-179 bears the N6-acetyllysine mark. The linker 12 stretch occupies residues 237-260; the sequence is QSQISDTSVVLSMDNSRSLDLDGI. A phosphoserine mark is found at Ser-252 and Ser-254. The interval 261-399 is coil 2; it reads IAEVKAQYEE…ATYRKLLEGE (139 aa). Glycyl lysine isopeptide (Lys-Gly) (interchain with G-Cter in SUMO2) cross-links involve residues Lys-265 and Lys-286. Thr-289 is subject to Phosphothreonine. Residues Lys-296 and Lys-331 each participate in a glycyl lysine isopeptide (Lys-Gly) (interchain with G-Cter in SUMO2) cross-link. The tract at residues 400–469 is tail; that stretch reads ESRLAGDGVG…ASASRRSARN (70 aa).

It belongs to the intermediate filament family. Heterotetramer of two type I and two type II keratins. Interacts with eukaryotic translation initiator factor 3 (eIF3) subunit EIF3S10. Interacts with GPER1. Arg-20 is dimethylated, probably to asymmetric dimethylarginine.

Functionally, blocks interferon-dependent interphase and stimulates DNA synthesis in cells. The chain is Keratin, type II cytoskeletal 7 from Pan troglodytes (Chimpanzee).